The chain runs to 295 residues: UDP-N-acetylenolpyruvoylglucosamine reductase (295 aa).

Residues 23-188 (KVGGPADFLA…ISAKFALKPG (166 aa)) enclose the FAD-binding PCMH-type domain. The active site involves Arg-167. The active-site Proton donor is the Ser-217. Glu-287 is a catalytic residue.

It belongs to the MurB family. Requires FAD as cofactor.

The protein localises to the cytoplasm. It catalyses the reaction UDP-N-acetyl-alpha-D-muramate + NADP(+) = UDP-N-acetyl-3-O-(1-carboxyvinyl)-alpha-D-glucosamine + NADPH + H(+). The protein operates within cell wall biogenesis; peptidoglycan biosynthesis. Functionally, cell wall formation. The sequence is that of UDP-N-acetylenolpyruvoylglucosamine reductase from Streptococcus pyogenes serotype M6 (strain ATCC BAA-946 / MGAS10394).